Here is a 352-residue protein sequence, read N- to C-terminus: Glycerol-3-phosphate dehydrogenase [NAD(P)+] (352 aa).

The NADPH site is built by Trp-11, Arg-37, and Lys-112. 3 residues coordinate sn-glycerol 3-phosphate: Lys-112, Gly-153, and Ser-155. Ala-157 serves as a coordination point for NADPH. Residues Lys-208, Asp-261, Ser-271, Arg-272, and Asn-273 each coordinate sn-glycerol 3-phosphate. The Proton acceptor role is filled by Lys-208. Arg-272 is an NADPH binding site. Positions 296 and 298 each coordinate NADPH.

This sequence belongs to the NAD-dependent glycerol-3-phosphate dehydrogenase family.

The protein localises to the cytoplasm. The catalysed reaction is sn-glycerol 3-phosphate + NAD(+) = dihydroxyacetone phosphate + NADH + H(+). It carries out the reaction sn-glycerol 3-phosphate + NADP(+) = dihydroxyacetone phosphate + NADPH + H(+). It participates in membrane lipid metabolism; glycerophospholipid metabolism. Its function is as follows. Catalyzes the reduction of the glycolytic intermediate dihydroxyacetone phosphate (DHAP) to sn-glycerol 3-phosphate (G3P), the key precursor for phospholipid synthesis. This Polaromonas naphthalenivorans (strain CJ2) protein is Glycerol-3-phosphate dehydrogenase [NAD(P)+].